The sequence spans 309 residues: tRNA dimethylallyltransferase (309 aa).

14 to 21 (GPTASGKS) is a binding site for ATP. A substrate-binding site is contributed by 16-21 (TASGKS). The segment at 39–42 (DSMQ) is interaction with substrate tRNA.

It belongs to the IPP transferase family. As to quaternary structure, monomer. Requires Mg(2+) as cofactor.

It catalyses the reaction adenosine(37) in tRNA + dimethylallyl diphosphate = N(6)-dimethylallyladenosine(37) in tRNA + diphosphate. Catalyzes the transfer of a dimethylallyl group onto the adenine at position 37 in tRNAs that read codons beginning with uridine, leading to the formation of N6-(dimethylallyl)adenosine (i(6)A). This chain is tRNA dimethylallyltransferase, found in Geobacter metallireducens (strain ATCC 53774 / DSM 7210 / GS-15).